Here is a 156-residue protein sequence, read N- to C-terminus: Small ribosomal subunit protein uS7 (156 aa).

This sequence belongs to the universal ribosomal protein uS7 family. Part of the 30S ribosomal subunit. Contacts proteins S9 and S11.

One of the primary rRNA binding proteins, it binds directly to 16S rRNA where it nucleates assembly of the head domain of the 30S subunit. Is located at the subunit interface close to the decoding center, probably blocks exit of the E-site tRNA. The protein is Small ribosomal subunit protein uS7 of Gloeothece citriformis (strain PCC 7424) (Cyanothece sp. (strain PCC 7424)).